The chain runs to 430 residues: Nitroalkane oxidase (430 aa).

FAD-binding positions include 132–135 (LVFS), 140–142 (VAN), 170–172 (WAT), arginine 301, glutamine 311, 372–376 (NAVGI), and 397–401 (IFDGG). Residue aspartate 399 is the Proton acceptor of the active site.

Belongs to the acyl-CoA dehydrogenase family. Homotetramer. It depends on FAD as a cofactor.

It catalyses the reaction a primary nitroalkane + O2 + H2O = an aldehyde + nitrite + H2O2 + H(+). It carries out the reaction a secondary nitroalkane + O2 + H2O = a ketone + nitrite + H2O2 + H(+). Functionally, nitroalkane oxidase (NAO) catalyzes the oxidation of nitroalkanes to the corresponding aldehydes or ketones with the release of nitrite and the consumption of molecular oxygen to yield hydrogen peroxide. NAO is unusual, since it catalyzes substrate oxidation by removing a substrate proton to form a carbanion intermediate. Prefers longer nitroalkanes, with 1-nitrohexane having the highest activity. This is Nitroalkane oxidase from Podospora anserina (strain S / ATCC MYA-4624 / DSM 980 / FGSC 10383) (Pleurage anserina).